A 352-amino-acid polypeptide reads, in one-letter code: MSKQQAQFTNPETPGYVGFANLPNQVHRKSVRKGFEFTLMVVGESGLGKSTLINSLFLTDLYPERVVPGAANKIERTVEIEASTVEIEERGVKLRLTVVDTPGYGDAMNCVDCFKPIISYVDNQFERYLHDESGLNRRHIVDNRVHCCFYFISPFGHGLKPLDVEFMKALHNKVNIVPVIAKADTLTLRERERLKRRVLDEIEERGIKIYHLPDAESDEDEDFKEQTRLLKASIPFTVVGSNQLIEAKGKKVRGRLYPWGVVEVENPEHNDFLKLRTMLITHMQDLQEVTQDLHYENFRSERLKKGGASKVENVEVTKDQMLQEKEAELRRMQEMIARMQAQMQIQSQSGDV.

Positions 33-305 constitute a Septin-type G domain; that stretch reads KGFEFTLMVV…ENFRSERLKK (273 aa). Positions 43–50 are G1 motif; the sequence is GESGLGKS. GTP-binding positions include 43–50, threonine 77, glycine 103, 182–190, glycine 240, and arginine 255; these read GESGLGKS and KADTLTLRE. The G3 motif stretch occupies residues 100–103; the sequence is DTPG. Residues 181–184 are G4 motif; that stretch reads AKAD. The interval 259-269 is important for dimerization; that stretch reads WGVVEVENPEH.

The protein belongs to the TRAFAC class TrmE-Era-EngA-EngB-Septin-like GTPase superfamily. Septin GTPase family. Septins polymerize into heterooligomeric protein complexes that form filaments, and associate with cellular membranes, actin filaments and microtubules. GTPase activity is required for filament formation. Can form heterooligomers with other family members and form filaments. Interacts with wdpcp.

It is found in the cytoplasm. The protein localises to the cytoskeleton. It localises to the spindle. Its subcellular location is the cleavage furrow. The protein resides in the midbody. It is found in the cell projection. The protein localises to the cilium membrane. In terms of biological role, filament-forming cytoskeletal GTPase. Required for normal organization of the actin cytoskeleton. Plays a role in the biogenesis of polarized columnar-shaped epithelium. Required for the progression through mitosis through regulation of chromosome congression. During anaphase, may be required for chromosome segregation and spindle elongation. Probably plays a role in ciliogenesis and collective cell movements including convergent extension during gastrulation. In cilia, required for the integrity of the diffusion barrier at the base of the primary cilium that prevents diffusion of transmembrane proteins between the cilia and plasma membranes. Controls cell shape and not polarization of cells during convergent extension. This chain is Septin-2B (sept2-b), found in Xenopus laevis (African clawed frog).